Reading from the N-terminus, the 141-residue chain is Hemoglobin subunit alpha-1/2 (141 aa).

A Globin domain is found at 1-141 (VLSAABKSBV…VSTVLTSKYR (141 aa)). Serine 3 is subject to Phosphoserine. N6-succinyllysine occurs at positions 7 and 11. At lysine 16 the chain carries N6-acetyllysine; alternate. Lysine 16 carries the post-translational modification N6-succinyllysine; alternate. Tyrosine 24 carries the phosphotyrosine modification. Residue serine 35 is modified to Phosphoserine. Lysine 40 carries the post-translational modification N6-succinyllysine. Serine 49 carries the phosphoserine modification. Position 58 (histidine 58) interacts with O2. A heme b-binding site is contributed by histidine 87. Serine 102 bears the Phosphoserine mark. At threonine 108 the chain carries Phosphothreonine. Residue serine 124 is modified to Phosphoserine. 2 positions are modified to phosphothreonine: threonine 134 and threonine 137. Serine 138 carries the phosphoserine modification.

Belongs to the globin family. Heterotetramer of two alpha chains and two beta chains. As to expression, red blood cells.

Its function is as follows. Involved in oxygen transport from the lung to the various peripheral tissues. The sequence is that of Hemoglobin subunit alpha-1/2 from Odocoileus virginianus virginianus (Virginia white-tailed deer).